Reading from the N-terminus, the 353-residue chain is Carbamoyl phosphate synthase arginine-specific small chain (353 aa).

Residues 1-162 (MEGYLVLEDG…EISTFGDGNK (162 aa)) are CPSase. Residues Ser-44, Gly-210, and Gly-212 each coordinate L-glutamine. Residues 163-349 (HIALIDFGYK…LKNVIPARRE (187 aa)) enclose the Glutamine amidotransferase type-1 domain. Cys-237 functions as the Nucleophile in the catalytic mechanism. Leu-238, Gln-241, Asn-279, and Tyr-282 together coordinate L-glutamine. Catalysis depends on residues His-322 and Glu-324.

Belongs to the CarA family. Composed of two chains; the small (or glutamine) chain promotes the hydrolysis of glutamine to ammonia, which is used by the large (or ammonia) chain to synthesize carbamoyl phosphate. Tetramer of heterodimers (alpha,beta)4.

The enzyme catalyses hydrogencarbonate + L-glutamine + 2 ATP + H2O = carbamoyl phosphate + L-glutamate + 2 ADP + phosphate + 2 H(+). It carries out the reaction L-glutamine + H2O = L-glutamate + NH4(+). It participates in amino-acid biosynthesis; L-arginine biosynthesis; carbamoyl phosphate from bicarbonate: step 1/1. Its function is as follows. Small subunit of the glutamine-dependent carbamoyl phosphate synthetase (CPSase). CPSase catalyzes the formation of carbamoyl phosphate from the ammonia moiety of glutamine, carbonate, and phosphate donated by ATP, constituting the first step of the biosynthetic pathway leading to arginine and/or urea. The small subunit (glutamine amidotransferase) binds and cleaves glutamine to supply the large subunit with the substrate ammonia. The polypeptide is Carbamoyl phosphate synthase arginine-specific small chain (Bacillus subtilis (strain 168)).